Consider the following 428-residue polypeptide: Enolase (428 aa).

A (2R)-2-phosphoglycerate-binding site is contributed by glutamine 163. Glutamate 205 serves as the catalytic Proton donor. Mg(2+)-binding residues include aspartate 242, glutamate 286, and aspartate 313. (2R)-2-phosphoglycerate is bound by residues lysine 338, arginine 367, serine 368, and lysine 389. Lysine 338 (proton acceptor) is an active-site residue.

It belongs to the enolase family. Requires Mg(2+) as cofactor.

It localises to the cytoplasm. Its subcellular location is the secreted. The protein localises to the cell surface. It catalyses the reaction (2R)-2-phosphoglycerate = phosphoenolpyruvate + H2O. It functions in the pathway carbohydrate degradation; glycolysis; pyruvate from D-glyceraldehyde 3-phosphate: step 4/5. Its function is as follows. Catalyzes the reversible conversion of 2-phosphoglycerate (2-PG) into phosphoenolpyruvate (PEP). It is essential for the degradation of carbohydrates via glycolysis. The polypeptide is Enolase (Lactobacillus acidophilus (strain ATCC 700396 / NCK56 / N2 / NCFM)).